The primary structure comprises 224 residues: UPF0758 protein lwe1562 (224 aa).

Positions 102-224 constitute an MPN domain; the sequence is VIRCPDDAVK…YISLKEKGYF (123 aa). 3 residues coordinate Zn(2+): histidine 173, histidine 175, and aspartate 186. Residues 173 to 186 carry the JAMM motif motif; sequence HNHPSGDPTPSSED.

Belongs to the UPF0758 family.

The protein is UPF0758 protein lwe1562 of Listeria welshimeri serovar 6b (strain ATCC 35897 / DSM 20650 / CCUG 15529 / CIP 8149 / NCTC 11857 / SLCC 5334 / V8).